Consider the following 206-residue polypeptide: Acireductone dioxygenase (206 aa).

Positions 102, 104, 108, and 146 each coordinate Fe(2+). Residues His-102, His-104, Glu-108, and His-146 each contribute to the Ni(2+) site.

Belongs to the acireductone dioxygenase (ARD) family. Monomer. Fe(2+) serves as cofactor. It depends on Ni(2+) as a cofactor.

It catalyses the reaction 1,2-dihydroxy-5-(methylsulfanyl)pent-1-en-3-one + O2 = 3-(methylsulfanyl)propanoate + CO + formate + 2 H(+). The catalysed reaction is 1,2-dihydroxy-5-(methylsulfanyl)pent-1-en-3-one + O2 = 4-methylsulfanyl-2-oxobutanoate + formate + 2 H(+). The protein operates within amino-acid biosynthesis; L-methionine biosynthesis via salvage pathway; L-methionine from S-methyl-5-thio-alpha-D-ribose 1-phosphate: step 5/6. Functionally, catalyzes 2 different reactions between oxygen and the acireductone 1,2-dihydroxy-3-keto-5-methylthiopentene (DHK-MTPene) depending upon the metal bound in the active site. Fe-containing acireductone dioxygenase (Fe-ARD) produces formate and 2-keto-4-methylthiobutyrate (KMTB), the alpha-ketoacid precursor of methionine in the methionine recycle pathway. Ni-containing acireductone dioxygenase (Ni-ARD) produces methylthiopropionate, carbon monoxide and formate, and does not lie on the methionine recycle pathway. This Frankia alni (strain DSM 45986 / CECT 9034 / ACN14a) protein is Acireductone dioxygenase.